Here is a 441-residue protein sequence, read N- to C-terminus: Methionine aminopeptidase 2A (441 aa).

The segment at 1–103 is disordered; it reads MAIGNPEVAT…SGDFPQGEIQ (103 aa). Over residues 18–33 the composition is skewed to polar residues; sequence AESSNGNESQLSSDLT. Basic and acidic residues predominate over residues 37–62; sequence DLAEVKEDEKDNNQEEEDGLKAEAST. Residues 63–76 are compositionally biased toward basic residues; it reads KKKKKKSKSKKKKS. Residue histidine 194 coordinates substrate. A divalent metal cation is bound by residues aspartate 214, aspartate 225, and histidine 294. Histidine 302 contributes to the substrate binding site. The a divalent metal cation site is built by glutamate 327 and glutamate 422.

This sequence belongs to the peptidase M24A family. Methionine aminopeptidase eukaryotic type 2 subfamily. The cofactor is Co(2+). Requires Zn(2+) as cofactor. Mn(2+) is required as a cofactor. It depends on Fe(2+) as a cofactor. Ubiquitous. Preferentially expressed in roots.

Its subcellular location is the cytoplasm. It carries out the reaction Release of N-terminal amino acids, preferentially methionine, from peptides and arylamides.. Its function is as follows. Cotranslationally removes the N-terminal methionine from nascent proteins. The N-terminal methionine is often cleaved when the second residue in the primary sequence is small and uncharged (Met-Ala-, Cys, Gly, Pro, Ser, Thr, or Val). The protein is Methionine aminopeptidase 2A of Arabidopsis thaliana (Mouse-ear cress).